The following is a 92-amino-acid chain: Small ribosomal subunit protein uS19 (92 aa).

The protein belongs to the universal ribosomal protein uS19 family.

Functionally, protein S19 forms a complex with S13 that binds strongly to the 16S ribosomal RNA. The protein is Small ribosomal subunit protein uS19 of Mycoplasmopsis synoviae (strain 53) (Mycoplasma synoviae).